Here is a 243-residue protein sequence, read N- to C-terminus: MVKELLRNHSSVRIYDGNPISKEIIEELIATAQMAATSHFVQAYSVIWVTDEEKKEKLGMLSGNPRQYETSGGAFVFCVDFKRLQSAGKLEGVDIVADSAENVLVGVADVSLFAQNFVVAAESMGYGICYIGGVRNKPEEISELFNLPEYVFPLFGLTIGVPARRNEVKPRLPVAAVLHENEYNTEKYEELLPAYNDTMEAYYNNRSSNRKIDNWTKQMADFLIEQRRPHIKDFLAKKGFNWK.

Belongs to the flavin oxidoreductase frp family. It depends on FMN as a cofactor.

The protein is CR(VI) reductase (chrR) of Pseudomonas sp. (strain G-1).